A 460-amino-acid polypeptide reads, in one-letter code: Putative 2,3-dihydroxypropane-1-sulfonate exporter (460 aa).

The Cytoplasmic segment spans residues 1–18; sequence MSQTSSNPATLRLPFKEK. The helical transmembrane segment at 19–39 threads the bilayer; the sequence is LAYGLGDLGSNILLDIGTLYL. Residues 40–46 are Periplasmic-facing; sequence LKFYTDV. A helical transmembrane segment spans residues 47-67; it reads LGLPGTYGGIIFLIAKFFTAF. The Cytoplasmic segment spans residues 68–91; that stretch reads TDMGTGIMLDSRRKIGPKGKFRPF. The helical transmembrane segment at 92–112 threads the bilayer; it reads VLYAAFPVTLLAIANFVGTPF. Topologically, residues 113–122 are periplasmic; the sequence is EVTGKTVVAT. A helical membrane pass occupies residues 123–143; the sequence is MLFMLYGLVFSMMNCSYGAMV. Residues 144–161 lie on the Cytoplasmic side of the membrane; that stretch reads PAITKNPDERASLAAWRQ. Residues 162–182 traverse the membrane as a helical segment; it reads GGATLGLLLCTVGFVPVMNLI. The Periplasmic portion of the chain corresponds to 183-190; sequence EGNAQLSY. Residues 191–211 form a helical membrane-spanning segment; that stretch reads IFAATLFSLFGLLFMWLCYAG. Residues 212 to 242 are Cytoplasmic-facing; sequence VKERYVEVKPVDSAQKPGLLQSFRAIAGNRP. Residues 243-263 form a helical membrane-spanning segment; it reads LFILCIANLCTLGAFNVKLAI. The Periplasmic portion of the chain corresponds to 264–275; it reads QVYYTQYVLNDP. Residues 276-296 form a helical membrane-spanning segment; the sequence is ILLSWMGFFSMGCIFIGVFLM. At 297–307 the chain is on the cytoplasmic side; it reads PGAVRRFGKKK. Residues 308 to 328 form a helical membrane-spanning segment; the sequence is VYIGGLLIWVAGDLLNYFFGG. A topological domain (periplasmic) is located at residue glycine 329. A helical membrane pass occupies residues 330–350; the sequence is SVSFVAFSCLAFFGSAFVNSL. Residues 351–386 lie on the Cytoplasmic side of the membrane; that stretch reads NWALVSDTVEYGEWRTGVRSEGTVYTGFTFFRKVSQ. Residues 387–407 form a helical membrane-spanning segment; it reads ALAGFFPGWMLTQIGYIPNVV. Residues 408–418 lie on the Periplasmic side of the membrane; it reads QSAGTVEGLRQ. Residues 419–439 traverse the membrane as a helical segment; that stretch reads LIFIYPCVLAVITIIAMGCFY. The Cytoplasmic segment spans residues 440–460; sequence NLNEKMYVRIVEEIEARKHTV.

Belongs to the sodium:galactoside symporter (TC 2.A.2) family.

The protein resides in the cell inner membrane. Functionally, could be involved in the export of 2,3-dihydroxypropane-1-sulfonate (DHPS). This chain is Putative 2,3-dihydroxypropane-1-sulfonate exporter (yihP), found in Salmonella typhimurium (strain LT2 / SGSC1412 / ATCC 700720).